The sequence spans 318 residues: Probable mitochondrial 2-oxoglutarate/malate carrier protein (318 aa).

3 Solcar repeats span residues 22–111, 119–210, and 219–309; these read QSQL…IKDI, LPFT…TKQL, and DDIK…LNIL. 6 helical membrane-spanning segments follow: residues 28-48, 79-99, 125-145, 185-205, 225-245, and 281-301; these read FVIG…IDSL, GFFT…TYTT, IMVG…ADLT, GCSP…SSYD, LIAS…LDVI, and FYKG…LTFI.

Belongs to the mitochondrial carrier (TC 2.A.29) family.

Its subcellular location is the mitochondrion inner membrane. Functionally, mitochondrial solute carriers shuttle metabolites, nucleotides, and cofactors through the mitochondrial inner membrane. Catalyzes the transport of 2-oxoglutarate across the inner mitochondrial membrane in an electroneutral exchange for malate or other dicarboxylic acids, and plays an important role in several metabolic processes, including the malate-aspartate shuttle, the oxoglutarate/isocitrate shuttle, in gluconeogenesis from lactate, and in nitrogen metabolism. The chain is Probable mitochondrial 2-oxoglutarate/malate carrier protein (ucpC) from Dictyostelium discoideum (Social amoeba).